The primary structure comprises 156 residues: Peptide methionine sulfoxide reductase MsrA (156 aa).

The active site involves C10.

Belongs to the MsrA Met sulfoxide reductase family.

It carries out the reaction L-methionyl-[protein] + [thioredoxin]-disulfide + H2O = L-methionyl-(S)-S-oxide-[protein] + [thioredoxin]-dithiol. The enzyme catalyses [thioredoxin]-disulfide + L-methionine + H2O = L-methionine (S)-S-oxide + [thioredoxin]-dithiol. Functionally, has an important function as a repair enzyme for proteins that have been inactivated by oxidation. Catalyzes the reversible oxidation-reduction of methionine sulfoxide in proteins to methionine. The chain is Peptide methionine sulfoxide reductase MsrA from Metamycoplasma arthritidis (strain 158L3-1) (Mycoplasma arthritidis).